A 122-amino-acid chain; its full sequence is Large ribosomal subunit protein bL12 (122 aa).

This sequence belongs to the bacterial ribosomal protein bL12 family. Homodimer. Part of the ribosomal stalk of the 50S ribosomal subunit. Forms a multimeric L10(L12)X complex, where L10 forms an elongated spine to which 2 to 4 L12 dimers bind in a sequential fashion. Binds GTP-bound translation factors.

In terms of biological role, forms part of the ribosomal stalk which helps the ribosome interact with GTP-bound translation factors. Is thus essential for accurate translation. The sequence is that of Large ribosomal subunit protein bL12 from Vibrio parahaemolyticus serotype O3:K6 (strain RIMD 2210633).